Here is a 76-residue protein sequence, read N- to C-terminus: Translational regulator CsrA (76 aa).

This sequence belongs to the CsrA/RsmA family. Homodimer; the beta-strands of each monomer intercalate to form a hydrophobic core, while the alpha-helices form wings that extend away from the core.

Its subcellular location is the cytoplasm. A translational regulator that binds mRNA to regulate translation initiation and/or mRNA stability. Usually binds in the 5'-UTR at or near the Shine-Dalgarno sequence preventing ribosome-binding, thus repressing translation. Its main target seems to be the major flagellin gene, while its function is anatagonized by FliW. This Pseudothermotoga lettingae (strain ATCC BAA-301 / DSM 14385 / NBRC 107922 / TMO) (Thermotoga lettingae) protein is Translational regulator CsrA.